A 214-amino-acid polypeptide reads, in one-letter code: Osteoclast-stimulating factor 1 (214 aa).

An N-acetylserine modification is found at S2. In terms of domain architecture, SH3 spans 12–71 (GQVKVFRALYTFEPRTPDELYFEEGDIIYITDMSDTNWWKGTSKGRTGLIPSNYVAEQAE). ANK repeat units lie at residues 72 to 101 (SIDN…GVNG), 105 to 135 (AGST…ELNQ), and 139 to 168 (LGDT…RTDL). Position 200 is a phosphothreonine (T200). 2 positions are modified to phosphoserine: S202 and S213.

Interacts with SRC and SMN1. Interacts with FASLG.

Its subcellular location is the cytoplasm. In terms of biological role, induces bone resorption, acting probably through a signaling cascade which results in the secretion of factor(s) enhancing osteoclast formation and activity. This is Osteoclast-stimulating factor 1 (OSTF1) from Sus scrofa (Pig).